The chain runs to 440 residues: Tetratricopeptide repeat protein 5 (440 aa).

5 TPR repeats span residues 7–61, 68–98, 103–130, 136–174, and 179–216; these read EEVK…EEVV, AQVLMLTGKALNVTPDYSPKAEELLSKAVKL, VEAWNQLGEVYWKKGDVAAAHTCFSGAL, KVSLQNLSMVLRQLRTDSGDEHSRHVMDSVRQAKLAVQM, and GRSWYILGNAYLSLYFNTGQNPKISQQALSAYAQAEKV. The short motif at 13-24 is the Nuclear export signal element; sequence LQKLQELVDQLY. Phosphoserine; by ATM is present on Ser-203. Ser-221 bears the Phosphoserine; by CHEK2 mark. Residues 224–253 form a TPR 6 repeat; that stretch reads PDLHLNRATLHKYEENYGEALEGFSRAAAL. The tract at residues 285–287 is mediates interaction with 28S rRNA of ribosome-coding tubulin; the sequence is KTK.

As to quaternary structure, interacts with JMY and p300/EP300; the interaction occurs in the nucleus and augments the association between JMY and p300/EP300 in response to DNA damage. Interacts with PRMT5; the interaction is DNA damage-dependent and promotes PRMT5 interaction with p53/TP53 and subsequent methylation. Forms a complex with HSF1 and p300/EP300; these interactions augment chromatin-bound HSF1 and p300/EP300 histone acetyltransferase activity, resulting in enhanced heat-shock-responsive transcription. Interacts with JMY; the interaction occurs in the cytoplasm and results in the inhibition of JYM's nucleation activity. Interacts with ribosome-coding tubulin (via 60S subunit 28S rRNA and protein uL24/RPL26) and the N-terminal of nascent tubulin polypeptide (via alpha-tubulin MREC motif and beta-tubulin MREI motif); these interactions result in tubulin mRNA-targeted degradation. Interacts with ATP5F1B; the interaction occurs in the mitochondria and results in ATP production decrease. Interacts with p53/TP53; the interaction occurs in the mitochondria and results in increased apoptosis. Phosphorylation by ATM kinase induces nuclear accumulation while interfering with nuclear export, and phosphorylation by CHEK2 kinase enhances nuclear stability.

Its subcellular location is the nucleus. It is found in the cytoplasm. The protein localises to the cytoplasmic vesicle. It localises to the mitochondrion matrix. In terms of biological role, cofactor involved in the regulation of various cellular mechanisms such as actin regulation, autophagy, chromatin regulation and DNA repair. In physiological conditions, interacts with cofactor JMY in the cytoplasm which prevents JMY's actin nucleation activity and ability to activate the Arp2/3 complex. Acts as a negative regulator of nutrient stress-induced autophagy by inhibiting JMY's interaction with MAP1LC3B, thereby preventing autophagosome formation. Involves in tubulin autoregulation by promoting its degradation in response to excess soluble tubulin. To do so, associates with the active ribosome near the ribosome exit tunnel and with nascent tubulin polypeptides early during their translation, triggering tubulin mRNA-targeted degradation. Following DNA damage, phosphorylated by DNA damage responsive protein kinases ATM and CHEK2, leading to its nuclear accumulation and stability. Nuclear TTC5/STRAP promotes the assembly of a stress-responsive p53/TP53 coactivator complex, which includes the coactivators JMY and p300, thereby increasing p53/TP53-dependent transcription and apoptosis. Also recruits arginine methyltransferase PRMT5 to p53/TP53 when DNA is damaged, allowing PRMT5 to methylate p53/TP53. In DNA stress conditions, also prevents p53/TP53 degradation by E3 ubiquitin ligase MDM2. Upon heat-shock stress, forms a chromatin-associated complex with heat-shock factor 1 HSF1 and p300/EP300 to stimulate heat-shock-responsive transcription, thereby increasing cell survival. Mitochondrial TTC5/STRAP interacts with ATP synthase subunit beta ATP5F1B which decreased ATP synthase activity and lowers mitochondrial ATP production, thereby regulating cellular respiration and mitochondrial-dependent apoptosis. Mitochondrial TTC5/STRAP also regulates p53/TP53-mediated apoptosis. The chain is Tetratricopeptide repeat protein 5 (TTC5) from Bos taurus (Bovine).